A 240-amino-acid polypeptide reads, in one-letter code: MADS-box transcription factor 27 (240 aa).

The MADS-box domain maps to 1–61 (MGRGKIVIRR…GRLYEYSSTS (61 aa)). One can recognise a K-box domain in the interval 86–176 (LKFWQREAAS…YKKISLIRQE (91 aa)). Over residues 220-231 (LPQHSDAEQSTA) the composition is skewed to polar residues. The interval 220 to 240 (LPQHSDAEQSTAPKLGLQLNP) is disordered.

As to expression, ubiquitous.

Its subcellular location is the nucleus. Probable transcription factor. The chain is MADS-box transcription factor 27 (MADS27) from Oryza sativa subsp. japonica (Rice).